Consider the following 186-residue polypeptide: MSVKDVAQKIEPKMKKCLEAFQHEITTIRTGKATTTLLDRVKVEAYGQQMPLKQVGNVSVQDAHTLMVQVWDKSMVSATEKAIRDANLGLNPAAEGQSIRVSIPPLTEERRKEFVKLTKKFGEDSKVSLRNLRRDMIQDIEKLEKAKAVSEDEKNKGKKDADDLLHKYEKLLMDMITAKEKEIMAV.

This sequence belongs to the RRF family.

The protein localises to the cytoplasm. Responsible for the release of ribosomes from messenger RNA at the termination of protein biosynthesis. May increase the efficiency of translation by recycling ribosomes from one round of translation to another. This is Ribosome-recycling factor from Chlorobium chlorochromatii (strain CaD3).